A 558-amino-acid chain; its full sequence is Dihydroxy-acid dehydratase (558 aa).

Position 78 (aspartate 78) interacts with Mg(2+). Cysteine 119 contributes to the [2Fe-2S] cluster binding site. Residues aspartate 120 and lysine 121 each coordinate Mg(2+). Lysine 121 is subject to N6-carboxylysine. Cysteine 192 contacts [2Fe-2S] cluster. Glutamate 446 serves as a coordination point for Mg(2+). Serine 472 functions as the Proton acceptor in the catalytic mechanism.

Belongs to the IlvD/Edd family. Homodimer. Requires [2Fe-2S] cluster as cofactor. Mg(2+) is required as a cofactor.

The catalysed reaction is (2R)-2,3-dihydroxy-3-methylbutanoate = 3-methyl-2-oxobutanoate + H2O. It carries out the reaction (2R,3R)-2,3-dihydroxy-3-methylpentanoate = (S)-3-methyl-2-oxopentanoate + H2O. Its pathway is amino-acid biosynthesis; L-isoleucine biosynthesis; L-isoleucine from 2-oxobutanoate: step 3/4. It functions in the pathway amino-acid biosynthesis; L-valine biosynthesis; L-valine from pyruvate: step 3/4. Functionally, functions in the biosynthesis of branched-chain amino acids. Catalyzes the dehydration of (2R,3R)-2,3-dihydroxy-3-methylpentanoate (2,3-dihydroxy-3-methylvalerate) into 2-oxo-3-methylpentanoate (2-oxo-3-methylvalerate) and of (2R)-2,3-dihydroxy-3-methylbutanoate (2,3-dihydroxyisovalerate) into 2-oxo-3-methylbutanoate (2-oxoisovalerate), the penultimate precursor to L-isoleucine and L-valine, respectively. The sequence is that of Dihydroxy-acid dehydratase from Campylobacter jejuni subsp. jejuni serotype O:23/36 (strain 81-176).